The sequence spans 440 residues: Protein disulfide-isomerase 5-2 (440 aa).

The first 23 residues, 1–23, serve as a signal peptide directing secretion; the sequence is MRSLKLLLCWISFLTLSISISAS. Residues 24 to 139 enclose the Thioredoxin domain; the sequence is SDDQFTLDGT…LVRYLKKFVA (116 aa). Active-site nucleophile residues include C61 and C64. C61 and C64 are disulfide-bonded. T160 carries the phosphothreonine modification. N-linked (GlcNAc...) asparagine glycosylation is present at N171. The chain crosses the membrane as a helical span at residues 376–396; that stretch reads SMIGIRSVYILVFLVAVIMML. A disordered region spans residues 406 to 440; the sequence is TGVRTATAVRERVDQATTVPEDESSEHKPSDKKED. Basic and acidic residues predominate over residues 430–440; it reads SEHKPSDKKED.

The protein belongs to the protein disulfide isomerase family. In terms of tissue distribution, widely expressed.

The protein localises to the membrane. In terms of biological role, acts as a protein-folding catalyst that interacts with nascent polypeptides to catalyze the formation, isomerization, and reduction or oxidation of disulfide bonds. The chain is Protein disulfide-isomerase 5-2 (PDIL5-2) from Arabidopsis thaliana (Mouse-ear cress).